The primary structure comprises 215 residues: ATP-dependent Clp protease proteolytic subunit (215 aa).

The active-site Nucleophile is the Ser116. Residue His141 is part of the active site.

Belongs to the peptidase S14 family. As to quaternary structure, fourteen ClpP subunits assemble into 2 heptameric rings which stack back to back to give a disk-like structure with a central cavity, resembling the structure of eukaryotic proteasomes.

The protein resides in the cytoplasm. It carries out the reaction Hydrolysis of proteins to small peptides in the presence of ATP and magnesium. alpha-casein is the usual test substrate. In the absence of ATP, only oligopeptides shorter than five residues are hydrolyzed (such as succinyl-Leu-Tyr-|-NHMec, and Leu-Tyr-Leu-|-Tyr-Trp, in which cleavage of the -Tyr-|-Leu- and -Tyr-|-Trp bonds also occurs).. In terms of biological role, cleaves peptides in various proteins in a process that requires ATP hydrolysis. Has a chymotrypsin-like activity. Plays a major role in the degradation of misfolded proteins. This Psychrobacter cryohalolentis (strain ATCC BAA-1226 / DSM 17306 / VKM B-2378 / K5) protein is ATP-dependent Clp protease proteolytic subunit.